The chain runs to 173 residues: Probable transcription termination protein NusA (173 aa).

Residues 31-97 form the KH domain; that stretch reads DEKIVFVVKE…EDVWVKKFGN (67 aa). Over residues 147 to 162 the composition is skewed to basic and acidic residues; it reads ADNRPKKDEIPEKAAE. Residues 147 to 173 form a disordered region; sequence ADNRPKKDEIPEKAAESSENVQAEENQ. The span at 163-173 shows a compositional bias: polar residues; it reads SSENVQAEENQ.

It belongs to the NusA family.

Its subcellular location is the cytoplasm. Its function is as follows. Participates in transcription termination. The chain is Probable transcription termination protein NusA from Methanococcus vannielii (strain ATCC 35089 / DSM 1224 / JCM 13029 / OCM 148 / SB).